Reading from the N-terminus, the 336-residue chain is Glyoxylate reductase (336 aa).

Residues 158–161 (FGRI), 180–182 (SRT), and 239–241 (IAR) each bind NADP(+). Catalysis depends on residues R241 and E270. Catalysis depends on H288, which acts as the Proton donor. 288 to 290 (HIG) is a binding site for NADP(+).

The protein belongs to the D-isomer specific 2-hydroxyacid dehydrogenase family. GyaR subfamily. Homodimer.

The protein localises to the cytoplasm. It carries out the reaction glycolate + NAD(+) = glyoxylate + NADH + H(+). This chain is Glyoxylate reductase, found in Pyrococcus furiosus (strain ATCC 43587 / DSM 3638 / JCM 8422 / Vc1).